The primary structure comprises 281 residues: Large ribosomal subunit protein uL2 (281 aa).

2 disordered regions span residues 1–23 (MAVK…DYSK) and 224–281 (RGSV…KDSK). Residues 12–23 (GRRNMSSLDYSK) are compositionally biased toward polar residues. Residues 261–281 (KTRKTKKSSTKLILRRRKDSK) are compositionally biased toward basic residues.

The protein belongs to the universal ribosomal protein uL2 family. As to quaternary structure, part of the 50S ribosomal subunit. Forms a bridge to the 30S subunit in the 70S ribosome.

Functionally, one of the primary rRNA binding proteins. Required for association of the 30S and 50S subunits to form the 70S ribosome, for tRNA binding and peptide bond formation. It has been suggested to have peptidyltransferase activity; this is somewhat controversial. Makes several contacts with the 16S rRNA in the 70S ribosome. The polypeptide is Large ribosomal subunit protein uL2 (Mycoplasmopsis agalactiae (strain NCTC 10123 / CIP 59.7 / PG2) (Mycoplasma agalactiae)).